Consider the following 124-residue polypeptide: Hemoglobin subunit alpha (124 aa).

Residues 1 to 124 (PLSAADKTII…VAKALSSHYR (124 aa)) form the Globin domain. H57 lines the O2 pocket. Residue H79 coordinates heme b.

Belongs to the globin family. In terms of assembly, hb 1 is a heterotetramer of two alpha and two beta-1 chains. Hb 2 is a heterotetramer of two alpha and two beta-2 chains. Hb 3 is a heterotetramer of two alpha and two beta-3 chains. In terms of tissue distribution, red blood cells (at protein level).

Involved in oxygen transport from gills to the various peripheral tissues. In Somniosus microcephalus (Greenland sleeper shark), this protein is Hemoglobin subunit alpha.